The sequence spans 508 residues: Light-independent protochlorophyllide reductase subunit B (508 aa).

A [4Fe-4S] cluster-binding site is contributed by Asp-36. The active-site Proton donor is the Asp-294. 429–430 (GM) is a binding site for substrate.

This sequence belongs to the ChlB/BchB/BchZ family. Protochlorophyllide reductase is composed of three subunits; ChlL, ChlN and ChlB. Forms a heterotetramer of two ChlB and two ChlN subunits. The cofactor is [4Fe-4S] cluster.

It carries out the reaction chlorophyllide a + oxidized 2[4Fe-4S]-[ferredoxin] + 2 ADP + 2 phosphate = protochlorophyllide a + reduced 2[4Fe-4S]-[ferredoxin] + 2 ATP + 2 H2O. The protein operates within porphyrin-containing compound metabolism; chlorophyll biosynthesis (light-independent). Functionally, component of the dark-operative protochlorophyllide reductase (DPOR) that uses Mg-ATP and reduced ferredoxin to reduce ring D of protochlorophyllide (Pchlide) to form chlorophyllide a (Chlide). This reaction is light-independent. The NB-protein (ChlN-ChlB) is the catalytic component of the complex. This Picosynechococcus sp. (strain ATCC 27264 / PCC 7002 / PR-6) (Agmenellum quadruplicatum) protein is Light-independent protochlorophyllide reductase subunit B.